Consider the following 303-residue polypeptide: Quinolinate synthase (303 aa).

Positions 24 and 41 each coordinate iminosuccinate. Cysteine 86 lines the [4Fe-4S] cluster pocket. Residues 112-114 (YIN) and serine 129 contribute to the iminosuccinate site. A [4Fe-4S] cluster-binding site is contributed by cysteine 172. Iminosuccinate-binding positions include 198-200 (HPE) and threonine 215. Cysteine 260 is a binding site for [4Fe-4S] cluster.

This sequence belongs to the quinolinate synthase family. Type 2 subfamily. It depends on [4Fe-4S] cluster as a cofactor.

Its subcellular location is the cytoplasm. The enzyme catalyses iminosuccinate + dihydroxyacetone phosphate = quinolinate + phosphate + 2 H2O + H(+). It functions in the pathway cofactor biosynthesis; NAD(+) biosynthesis; quinolinate from iminoaspartate: step 1/1. Its function is as follows. Catalyzes the condensation of iminoaspartate with dihydroxyacetone phosphate to form quinolinate. The sequence is that of Quinolinate synthase from Caldicellulosiruptor saccharolyticus (strain ATCC 43494 / DSM 8903 / Tp8T 6331).